Here is a 181-residue protein sequence, read N- to C-terminus: Adenine phosphoribosyltransferase (181 aa).

It belongs to the purine/pyrimidine phosphoribosyltransferase family. Homodimer.

It localises to the cytoplasm. The enzyme catalyses AMP + diphosphate = 5-phospho-alpha-D-ribose 1-diphosphate + adenine. The protein operates within purine metabolism; AMP biosynthesis via salvage pathway; AMP from adenine: step 1/1. Its function is as follows. Catalyzes a salvage reaction resulting in the formation of AMP, that is energically less costly than de novo synthesis. The polypeptide is Adenine phosphoribosyltransferase (Pseudoalteromonas translucida (strain TAC 125)).